Reading from the N-terminus, the 202-residue chain is Protein TIFY 11g (202 aa).

Residues 1-11 (MDAVGAAGGGA) are compositionally biased toward gly residues. The segment at 1 to 31 (MDAVGAAGGGAMLPAAARRGQPPQPPCMTTA) is disordered. Residues 12–21 (MLPAAARRGQ) are compositionally biased toward low complexity. Residues 101-136 (ATAPTAPLTIVYGGQVLVFEHYTAEAAEKLVQRTQH) enclose the Tify domain. Residues 185-200 (PIARKASLQRFLQKRK) carry the Jas motif. The Nuclear localization signal motif lies at 187–194 (ARKASLQR).

The protein belongs to the TIFY/JAZ family. Ubiquitinated. Targeted for degradation by the SCF(COI1) E3 ubiquitin ligase-proteasome pathway during jasmonate signaling.

The protein resides in the nucleus. Its function is as follows. Repressor of jasmonate responses. In Oryza sativa subsp. japonica (Rice), this protein is Protein TIFY 11g.